A 181-amino-acid chain; its full sequence is Negative modulator of initiation of replication (181 aa).

Interaction with DNA stretches follow at residues 87-88 (AV), 116-120 (RTRVY), and 150-156 (NTNTGRK).

This sequence belongs to the SeqA family. As to quaternary structure, homodimer. Polymerizes to form helical filaments.

It is found in the cytoplasm. In terms of biological role, negative regulator of replication initiation, which contributes to regulation of DNA replication and ensures that replication initiation occurs exactly once per chromosome per cell cycle. Binds to pairs of hemimethylated GATC sequences in the oriC region, thus preventing assembly of replication proteins and re-initiation at newly replicated origins. Repression is relieved when the region becomes fully methylated. This chain is Negative modulator of initiation of replication, found in Shigella flexneri.